The following is a 45-amino-acid chain: Large ribosomal subunit protein bL36 (45 aa).

A disordered region spans residues 1–20; sequence MKVSSSIKADPSKGDKLVRR.

Belongs to the bacterial ribosomal protein bL36 family.

The polypeptide is Large ribosomal subunit protein bL36 (Chlamydia abortus (strain DSM 27085 / S26/3) (Chlamydophila abortus)).